The following is a 295-amino-acid chain: Ornithine carbamoyltransferase, catabolic (295 aa).

Residues 49–52, glutamine 76, arginine 100, and 127–130 contribute to the carbamoyl phosphate site; these read STRT and HPCQ. Residues asparagine 155, aspartate 213, and 217-218 each bind L-ornithine; that span reads SM. Residues 253–254 and arginine 281 contribute to the carbamoyl phosphate site; that span reads CL.

The protein belongs to the aspartate/ornithine carbamoyltransferase superfamily. OTCase family. As to quaternary structure, homohexamer.

The protein resides in the cytoplasm. It carries out the reaction carbamoyl phosphate + L-ornithine = L-citrulline + phosphate + H(+). The protein operates within amino-acid degradation; L-arginine degradation via ADI pathway; carbamoyl phosphate from L-arginine: step 2/2. Arginine lead to a slight activation. Inhibited by all nucleotide phosphates. Reversibly catalyzes the transfer of the carbamoyl group from carbamoyl phosphate (CP) to the N(epsilon) atom of ornithine (ORN) to produce L-citrulline. The chain is Ornithine carbamoyltransferase, catabolic (arcB) from Halobacterium salinarum (strain ATCC 700922 / JCM 11081 / NRC-1) (Halobacterium halobium).